The primary structure comprises 140 residues: Large ribosomal subunit protein uL16 (140 aa).

The protein belongs to the universal ribosomal protein uL16 family. As to quaternary structure, part of the 50S ribosomal subunit.

Functionally, binds 23S rRNA and is also seen to make contacts with the A and possibly P site tRNAs. The sequence is that of Large ribosomal subunit protein uL16 from Malacoplasma penetrans (strain HF-2) (Mycoplasma penetrans).